Consider the following 957-residue polypeptide: Glycine dehydrogenase (decarboxylating) 2 (957 aa).

N6-(pyridoxal phosphate)lysine is present on K707.

The protein belongs to the GcvP family. In terms of assembly, the glycine cleavage system is composed of four proteins: P, T, L and H. It depends on pyridoxal 5'-phosphate as a cofactor.

It catalyses the reaction N(6)-[(R)-lipoyl]-L-lysyl-[glycine-cleavage complex H protein] + glycine + H(+) = N(6)-[(R)-S(8)-aminomethyldihydrolipoyl]-L-lysyl-[glycine-cleavage complex H protein] + CO2. In terms of biological role, the glycine cleavage system catalyzes the degradation of glycine. The P protein binds the alpha-amino group of glycine through its pyridoxal phosphate cofactor; CO(2) is released and the remaining methylamine moiety is then transferred to the lipoamide cofactor of the H protein. The sequence is that of Glycine dehydrogenase (decarboxylating) 2 (gcvP2) from Pseudomonas putida (strain ATCC 47054 / DSM 6125 / CFBP 8728 / NCIMB 11950 / KT2440).